Consider the following 299-residue polypeptide: Oxygen-dependent coproporphyrinogen-III oxidase (299 aa).

Residue serine 92 coordinates substrate. The a divalent metal cation site is built by histidine 96 and histidine 106. Histidine 106 serves as the catalytic Proton donor. Substrate is bound at residue 108 to 110; sequence NVR. Residues histidine 145 and histidine 175 each coordinate a divalent metal cation. Positions 240–275 are important for dimerization; the sequence is YVEFNLVWDRGTLFGLQTGGRTESILMSMPPLVRWE. Residue 258-260 participates in substrate binding; it reads GGR.

The protein belongs to the aerobic coproporphyrinogen-III oxidase family. In terms of assembly, homodimer. The cofactor is a divalent metal cation.

It is found in the cytoplasm. It carries out the reaction coproporphyrinogen III + O2 + 2 H(+) = protoporphyrinogen IX + 2 CO2 + 2 H2O. The protein operates within porphyrin-containing compound metabolism; protoporphyrin-IX biosynthesis; protoporphyrinogen-IX from coproporphyrinogen-III (O2 route): step 1/1. Functionally, involved in the heme biosynthesis. Catalyzes the aerobic oxidative decarboxylation of propionate groups of rings A and B of coproporphyrinogen-III to yield the vinyl groups in protoporphyrinogen-IX. This Salmonella dublin (strain CT_02021853) protein is Oxygen-dependent coproporphyrinogen-III oxidase.